We begin with the raw amino-acid sequence, 266 residues long: 14-3-3 protein homolog (266 aa).

Positions K154–A177 are disordered. Polar residues predominate over residues D158–T168.

It belongs to the 14-3-3 family.

The polypeptide is 14-3-3 protein homolog (Neospora caninum (Coccidian parasite)).